A 333-amino-acid polypeptide reads, in one-letter code: DNA-directed RNA polymerase subunit alpha (333 aa).

An alpha N-terminal domain (alpha-NTD) region spans residues 1 to 233 (MVREKIRVST…DLFIPFLHAE (233 aa)). An alpha C-terminal domain (alpha-CTD) region spans residues 269–333 (IALKYIFIDQ…DILEMEKNFA (65 aa)).

Belongs to the RNA polymerase alpha chain family. As to quaternary structure, in plastids the minimal PEP RNA polymerase catalytic core is composed of four subunits: alpha, beta, beta', and beta''. When a (nuclear-encoded) sigma factor is associated with the core the holoenzyme is formed, which can initiate transcription.

It localises to the plastid. The protein localises to the chloroplast. It carries out the reaction RNA(n) + a ribonucleoside 5'-triphosphate = RNA(n+1) + diphosphate. In terms of biological role, DNA-dependent RNA polymerase catalyzes the transcription of DNA into RNA using the four ribonucleoside triphosphates as substrates. This Cucumis sativus (Cucumber) protein is DNA-directed RNA polymerase subunit alpha.